Reading from the N-terminus, the 124-residue chain is Seripauperin-15 (124 aa).

An N-terminal signal peptide occupies residues 1–20 (MVKLTSIAAGVAAIAAGVAA).

This sequence belongs to the SRP1/TIP1 family. Seripauperin subfamily.

This is Seripauperin-15 (PAU15) from Saccharomyces cerevisiae (strain ATCC 204508 / S288c) (Baker's yeast).